A 714-amino-acid polypeptide reads, in one-letter code: Centromere/kinetochore protein zw10 (714 aa).

Belongs to the ZW10 family.

Its subcellular location is the cytoplasm. It is found in the nucleus. The protein localises to the chromosome. The protein resides in the centromere. It localises to the kinetochore. In terms of biological role, required for accurate chromosome segregation. This Drosophila grimshawi (Hawaiian fruit fly) protein is Centromere/kinetochore protein zw10 (mit(1)15).